The primary structure comprises 144 residues: Large ribosomal subunit protein uL15 (144 aa).

The disordered stretch occupies residues 1-58 (MRLNTLAPAAGSKHAPKRVGRGIGSGLGKTGGRGHKGQKSRSGGKVRPGFEGGQMPLK). Positions 21–31 (RGIGSGLGKTG) are enriched in gly residues. Positions 32 to 44 (GRGHKGQKSRSGG) are enriched in basic residues.

The protein belongs to the universal ribosomal protein uL15 family. Part of the 50S ribosomal subunit.

Binds to the 23S rRNA. The protein is Large ribosomal subunit protein uL15 of Vibrio parahaemolyticus serotype O3:K6 (strain RIMD 2210633).